A 2197-amino-acid chain; its full sequence is MLARCVSYQGSCDNINGILTRDYAEIYTDWANYYLERAKSKRKVTDLSADCRDGLLLAEVIEAVTSFKVPDLVKKPKNQQQMFDNVNSCLHVLRSQSVGGLENITTNDICAGRLKAVLALFFALSRFKQQAKQTKSIGVGCGGGVGGSSSTLTGSGSVLGIGIGGLRTPGSSLNQDKNQQEQQQQQQQQQTPQQLAQSLENGNEMVNRQIAPAYAKVNGGTAIPLPATVMVQRRCPPDKVRPLPPTPNHTPSIPGLGKSGSDFNTSRPNSPPTSNHTIQSLKSGNNNSLRPPSIKSGIPSPSSPQTAPQKHSMLDKLKLFNKEKQQNAVNAASVASKTQIQSKRTSSSSGFSSARSERSDSSLSLNDGHGSQLKPPSISVSSQKPQPKTKQSKLLAAQQKKEQANKATKLDKKEKSPARSLNKEESGNESRSSTMGRTGKSSLVRAVGGVEKNTPKTSSKSSLHSKSDSKSSLKAPQLLQSPSSGGLPKPIAAIKGTSKLPSLGGGAGHLPAAESQQNQQLLKRETSDISSNISQPPPAEPPISTHAHIHQNQTPPPPYYANSQPTSHISSHGFLSEPSTPQHSSGIYGSSRLPPPKSALSAPRKLEYNAGPHILSSPTHHQRQGLPRPLVNSAPNTPTASPNKFHTIPSKIVGTIYESKEEQLLPAPPPASGGSSILPMRPLLRGYNSHVTLPTRGARGGHHPHQSYLDFCESDIGQGYCSDGDALRVGSSPGGSRFHDIDNGYLSEGSSGLNGPSSSAGGISPGKHFLSMMRARTQLPTTIEERIRNSRGSLDSIGTAANGSSAASQASSSGGSTTTHAQNNNNNNNNNSGGGAKMDGSPHHRPGSRNGRDNWSKMPEPLNGQKVEKSDKSSPSRRSMGGGGSGSSSKQGSPSSSSRTKGVPPSFGYVKRANGSIASTAEQQNIAMMMAAGGAGANGLPCGRTAHVSAVPRTASGRKVAGGTQTLPNDMNKLPPNTQHRSFSLTGPTATQLSQSIRERLATGSHSLPKPGSDLHVFQHRISNRGGTRHDGSLSDTQTYAEVKPEYSSYAMWLKHSNTAGSRLSDGESVEQLQIGSPALTRHGHKMIHNRSGGPGQMAGQMSGNESPYVQSPRMNRSNSIRSTKSEKMYPSMMSRAGEVEIEPYYCLPVGTNGVLTAQMAAAMAAQSQAAQGNPGVGVNVGGVAWSQPTSPTPLTRGPFNTAAGASVLSPTHGTTSAAGLVGPGGGAGGGAMVGHRLTYPKKNDEVHGSAASLLSGGSSLYGNAEERQAHEIRRLKRELQDARDQVLSLSSQLSTNAHVVTAFEQSLSNMTNRLHQLTATAERKDGELTDMRQTIELLRKQSIQAGLTTAHMQSMGVQTQGQGQVQGQALGQALGQPGSDQKPPNSGSQRAINANNGSMPLGMQRQHSTDSMCSLNSISSGCSAAQDKNKANKKKGWLRSSFTKAFSRNAKISKTSRHVGHHHHHNHSQQELASGKLPLHNGHGEPLGLASLATQPAPPLPNSKQSSPAKTVTLIDNAKPIDAIDQEDQHVVEDLKKQLREKDLVLTDIRLEALSSASQLESLKEMMNKMRAEMMSLKHNNERLQKLVTTRSLAGSEASLGQAISPNGSVAGSSEVSRRYSLADSNSRPPMELPARLSEELELEEDCLPPAPAPEQPPPPAPNGVSVAPLSPSTHVDLTPPPPALEAAPMASPVHMASATEELADVCDGKKIAIACYLGQPEAFAKYCEELQELDGFYANGHEADSQSQSERKSNYTSASCNEFVIACTYISGKTTWQNLDYVVRKTFKDYVARIDPGTNLGLNTDSITSYHLGEAKRGPEMGFPELLPCGYIVGSVRTLYICLQGVGSLAFDSLIPRSIVHRYISLLTEHRRLILCGPSGTGKSYLARRLAEFLVARSARGNPSEAIATFNVDHKSSKDLRQYLGHIAEQAAIANGVSELPSVIILDNLHHASALGDVFSCLLSAGPANKLPCIIGTMSQATCNTTNLQLHHNFRWVLTANHMEPVKGFLGRFLRRRLFQLELQTQHPQPELAAVLAWLPSVWQHINRFLEVHSSSDVTIGPRLFLACPMDLKDSQVWFTDIWNYHLSPYLVEAVREGVQLYGRRGGAWNDPSAFIRNSYPWPYGPDSVPPLRQINAEDVGLEGVALTNGDQQDPLLNMLMRLQEAANYSEAQDQESDCASLDSNVTPESSAGAE.

Residues 21–129 (RDYAEIYTDW…LFFALSRFKQ (109 aa)) form the Calponin-homology (CH) domain. Disordered stretches follow at residues 165 to 197 (GLRT…QLAQ), 235 to 311 (CPPD…PQKH), 331 to 646 (AASV…NKFH), 730 to 767 (GSSP…SPGK), 788 to 910 (RNSR…FGYV), 1094 to 1119 (GPGQ…NRSN), and 1202 to 1223 (TAAG…GLVG). A compositionally biased stretch (low complexity) spans 175 to 197 (QDKNQQEQQQQQQQQQTPQQLAQ). The segment covering 261–290 (SDFNTSRPNSPPTSNHTIQSLKSGNNNSLR) has biased composition (polar residues). The span at 291–304 (PPSIKSGIPSPSSP) shows a compositional bias: low complexity. The segment covering 331-341 (AASVASKTQIQ) has biased composition (polar residues). Composition is skewed to low complexity over residues 342 to 354 (SKRT…FSSA) and 379 to 398 (SVSS…LAAQ). Residues 399 to 428 (QKKEQANKATKLDKKEKSPARSLNKEESGN) show a composition bias toward basic and acidic residues. Composition is skewed to polar residues over residues 429-441 (ESRS…TGKS), 561-570 (ANSQPTSHIS), 577-588 (EPSTPQHSSGIY), and 633-644 (SAPNTPTASPNK). Low complexity-rich tracts occupy residues 755–766 (GPSSSAGGISPG), 796–831 (SIGT…NNNN), and 887–904 (SSSK…KGVP). The span at 1100–1119 (GQMSGNESPYVQSPRMNRSN) shows a compositional bias: polar residues. Residues 1262 to 1342 (YGNAEERQAH…RQTIELLRKQ (81 aa)) are a coiled coil. Disordered regions lie at residues 1373–1415 (QALG…SMCS) and 1455–1511 (KTSR…SPAK). Composition is skewed to polar residues over residues 1379-1399 (GSDQ…NNGS) and 1406-1415 (RQHSTDSMCS). Positions 1455–1468 (KTSRHVGHHHHHNH) are enriched in basic residues. A coiled-coil region spans residues 1556 to 1591 (SSASQLESLKEMMNKMRAEMMSLKHNNERLQKLVTT). Disordered regions lie at residues 1600-1633 (SLGQ…PPME), 1648-1690 (CLPP…EAAP), and 2172-2197 (SEAQ…AGAE). A compositionally biased stretch (polar residues) spans 1603-1616 (QAISPNGSVAGSSE). The segment covering 1650–1663 (PPAPAPEQPPPPAP) has biased composition (pro residues). The span at 2184-2197 (LDSNVTPESSAGAE) shows a compositional bias: polar residues.

It belongs to the Nav/unc-53 family.

Its function is as follows. Required for the immune deficiency pathway, which mediates responses to Gram-negative bacterial infection. Favors Rel activation and nuclear translocation. In Drosophila melanogaster (Fruit fly), this protein is Protein sickie (sick).